Reading from the N-terminus, the 102-residue chain is Small ribosomal subunit protein uS10 (102 aa).

The protein belongs to the universal ribosomal protein uS10 family. Part of the 30S ribosomal subunit.

Its function is as follows. Involved in the binding of tRNA to the ribosomes. The polypeptide is Small ribosomal subunit protein uS10 (Saccharolobus islandicus (strain M.16.4 / Kamchatka #3) (Sulfolobus islandicus)).